Reading from the N-terminus, the 266-residue chain is GRIP and coiled-coil domain-containing protein C365.11 (266 aa).

Residues 1–13 are compositionally biased toward polar residues; it reads METTVSAKNSLEN. The segment at 1 to 88 is disordered; the sequence is METTVSAKNS…LDEKVKELEN (88 aa). Position 10 is a phosphoserine (serine 10). Residues 36-49 show a composition bias toward basic residues; sequence ASKKKRKNRKKKKN. A compositionally biased stretch (basic and acidic residues) spans 63-88; it reads EEQRSGSIDSKDKEKPLDEKVKELEN. Positions 73 to 188 form a coiled coil; that stretch reads KDKEKPLDEK…ESVKSHESEL (116 aa). Residues serine 202 and serine 204 each carry the phosphoserine modification. Residues 216–264 form the GRIP domain; sequence ISKELINKEYARNVLLQFLENHEHRDKILPILSTALDLEEVHQHLILKN.

It is found in the cytoplasm. In Schizosaccharomyces pombe (strain 972 / ATCC 24843) (Fission yeast), this protein is GRIP and coiled-coil domain-containing protein C365.11.